The primary structure comprises 161 residues: Sterile alpha motif domain-containing protein 12 (161 aa).

Residues 44 to 64 are disordered; the sequence is QKVPDQKGTPKRLQGEAETAK. The SAM domain maps to 77 to 143; that stretch reads WTQQDVCKWL…LQQVLQLKVR (67 aa).

The sequence is that of Sterile alpha motif domain-containing protein 12 (Samd12) from Mus musculus (Mouse).